A 674-amino-acid chain; its full sequence is Probable copper-transporting P-type ATPase B (674 aa).

A disordered region spans residues 1-22; it reads MNHSNQMHHDNHESHNHHSGHA. Basic and acidic residues predominate over residues 7–16; sequence MHHDNHESHN. 6 helical membrane-spanning segments follow: residues 32–52, 57–77, 95–115, 127–147, 284–304, and 315–335; these read FFVSLIFAIPIILLSPLMGVN, FTFPGSEWVVLILSTILFFYG, GMMTLVALGISVAYIYSLYAF, TMDFFWELATLILIMLLGHWI, GYLFYFAVSVGVISFIVWMLI, and LVTVLVIACPHALGLAIPLVT. The active-site 4-aspartylphosphate intermediate is the Asp367. Asp565 and Asp569 together coordinate Mg(2+). Helical transmembrane passes span 623–645 and 649–671; these read LWWGAGYNIVAVPLAAGILAFIG and SPAIGAILMSLSTVIVAINAFTL.

This sequence belongs to the cation transport ATPase (P-type) (TC 3.A.3) family. Type IB subfamily.

It is found in the cell membrane. The catalysed reaction is Cu(+)(in) + ATP + H2O = Cu(+)(out) + ADP + phosphate + H(+). In terms of biological role, involved in copper transport. This is Probable copper-transporting P-type ATPase B (copB) from Staphylococcus epidermidis (strain ATCC 35984 / DSM 28319 / BCRC 17069 / CCUG 31568 / BM 3577 / RP62A).